Here is a 163-residue protein sequence, read N- to C-terminus: uncharacterized protein (163 aa).

A helical membrane pass occupies residues 7-23; the sequence is TLVAFIATFFNLAATSI.

It localises to the membrane. This is an uncharacterized protein from Saccharomyces cerevisiae (strain ATCC 204508 / S288c) (Baker's yeast).